A 426-amino-acid chain; its full sequence is D-tagatose-1,6-bisphosphate aldolase subunit KbaZ (426 aa).

This sequence belongs to the GatZ/KbaZ family. KbaZ subfamily. Forms a complex with KbaY.

It participates in carbohydrate metabolism; D-tagatose 6-phosphate degradation; D-glyceraldehyde 3-phosphate and glycerone phosphate from D-tagatose 6-phosphate: step 2/2. Component of the tagatose-1,6-bisphosphate aldolase KbaYZ that is required for full activity and stability of the Y subunit. Could have a chaperone-like function for the proper and stable folding of KbaY. When expressed alone, KbaZ does not show any aldolase activity. This Escherichia coli O7:K1 (strain IAI39 / ExPEC) protein is D-tagatose-1,6-bisphosphate aldolase subunit KbaZ.